A 97-amino-acid chain; its full sequence is Large ribosomal subunit protein eL21 (97 aa).

A compositionally biased stretch (basic residues) spans 1 to 24 (MVQKPHSFRRKTRKKLRKHPRRRG). A disordered region spans residues 1–25 (MVQKPHSFRRKTRKKLRKHPRRRGL).

This sequence belongs to the eukaryotic ribosomal protein eL21 family.

This Pyrococcus horikoshii (strain ATCC 700860 / DSM 12428 / JCM 9974 / NBRC 100139 / OT-3) protein is Large ribosomal subunit protein eL21 (rpl21e).